The chain runs to 278 residues: Ribonuclease HII (278 aa).

The region spanning 71–259 (WPVAGCDEAG…VAAAWDKHAP (189 aa)) is the RNase H type-2 domain. Asp77, Glu78, and Asp168 together coordinate a divalent metal cation.

This sequence belongs to the RNase HII family. Mn(2+) is required as a cofactor. Requires Mg(2+) as cofactor.

Its subcellular location is the cytoplasm. The catalysed reaction is Endonucleolytic cleavage to 5'-phosphomonoester.. Its function is as follows. Endonuclease that specifically degrades the RNA of RNA-DNA hybrids. The sequence is that of Ribonuclease HII from Rhodopseudomonas palustris (strain BisA53).